The following is a 49-amino-acid chain: Large ribosomal subunit protein bL33B (49 aa).

The protein belongs to the bacterial ribosomal protein bL33 family.

The chain is Large ribosomal subunit protein bL33B (rpmG2) from Lactococcus lactis subsp. cremoris (Streptococcus cremoris).